Consider the following 180-residue polypeptide: NADH-quinone oxidoreductase subunit I (180 aa).

2 4Fe-4S ferredoxin-type domains span residues 50 to 80 (LTRD…LQKA) and 90 to 119 (EFFR…LTPD). 8 residues coordinate [4Fe-4S] cluster: Cys60, Cys63, Cys66, Cys70, Cys99, Cys102, Cys105, and Cys109.

The protein belongs to the complex I 23 kDa subunit family. NDH-1 is composed of 13 different subunits. Subunits NuoA, H, J, K, L, M, N constitute the membrane sector of the complex. [4Fe-4S] cluster is required as a cofactor.

The protein localises to the cell inner membrane. The catalysed reaction is a quinone + NADH + 5 H(+)(in) = a quinol + NAD(+) + 4 H(+)(out). In terms of biological role, NDH-1 shuttles electrons from NADH, via FMN and iron-sulfur (Fe-S) centers, to quinones in the respiratory chain. The immediate electron acceptor for the enzyme in this species is believed to be ubiquinone. Couples the redox reaction to proton translocation (for every two electrons transferred, four hydrogen ions are translocated across the cytoplasmic membrane), and thus conserves the redox energy in a proton gradient. This chain is NADH-quinone oxidoreductase subunit I, found in Yersinia pseudotuberculosis serotype O:1b (strain IP 31758).